Here is a 628-residue protein sequence, read N- to C-terminus: Putative pentatricopeptide repeat-containing protein At3g13770, mitochondrial (628 aa).

Residues 1–19 constitute a mitochondrion transit peptide; that stretch reads MFNLMRLIHRSFSSSPTNY. PPR repeat units follow at residues 51-85, 86-116, 117-151, 152-186, 187-217, 218-252, 253-287, 288-318, 319-353, 355-389, and 392-422; these read GFHG…RYLP, ATYL…MPEK, NVVS…DGKP, NEFT…NYDS, HIFV…LPER, DVVS…GMSP, NYVT…ELPF, YAVL…MPER, TAIS…KRVK, DAVT…EYGT, and GTEH…MPSK. Positions 427–502 are type E motif; the sequence is VLGSLLGACR…EPGRSWIQHE (76 aa). Residues 503–533 are type E(+) motif; it reads QTLHYFHANDRTHPRREEVLAKMKEISIKMK. The interval 534–628 is type DYW motif; sequence QAGYVPDLSC…DGICSCGDYW (95 aa).

The protein belongs to the PPR family. PCMP-H subfamily.

It localises to the mitochondrion. This Arabidopsis thaliana (Mouse-ear cress) protein is Putative pentatricopeptide repeat-containing protein At3g13770, mitochondrial (PCMP-H85).